We begin with the raw amino-acid sequence, 468 residues long: Methionine aminopeptidase 2 (468 aa).

A compositionally biased stretch (basic and acidic residues) spans 63-74; sequence AAKEATKKDAKG. The disordered stretch occupies residues 63-87; sequence AAKEATKKDAKGGKGKANGSAAATA. His-219 provides a ligand contact to substrate. A divalent metal cation is bound by residues Asp-239, Asp-250, and His-319. Residue His-327 coordinates substrate. A divalent metal cation contacts are provided by Glu-352 and Glu-449.

The protein belongs to the peptidase M24A family. Methionine aminopeptidase eukaryotic type 2 subfamily. Co(2+) serves as cofactor. It depends on Zn(2+) as a cofactor. Requires Mn(2+) as cofactor. The cofactor is Fe(2+).

It is found in the cytoplasm. It carries out the reaction Release of N-terminal amino acids, preferentially methionine, from peptides and arylamides.. Inhibited by the fumagillin analog, TNP-470. Cotranslationally removes the N-terminal methionine from nascent proteins. The N-terminal methionine is often cleaved when the second residue in the primary sequence is small and uncharged (Met-Ala-, Cys, Gly, Pro, Ser, Thr, or Val). Required for germ cell proliferation and/or differentiation. This is Methionine aminopeptidase 2 from Caenorhabditis elegans.